The chain runs to 31 residues: Protamine-Z (31 aa).

A disordered region spans residues 1–31 (ARRRRSRRASRPVRRRRPRRVSRRRRARRRR).

As to expression, testis.

It localises to the nucleus. The protein localises to the chromosome. In terms of biological role, protamines substitute for histones in the chromatin of sperm during the haploid phase of spermatogenesis. They compact sperm DNA into a highly condensed, stable and inactive complex. The protein is Protamine-Z of Clupea harengus (Atlantic herring).